The chain runs to 411 residues: Lissencephaly-1 homolog (411 aa).

Residues 9-41 (QREELNQAIADYLGSNGYADSLEAFRKEADLST) enclose the LisH domain. Residues 56 to 83 (TSVIRLQKKVMELEAKLTEAEKEVIEGA) adopt a coiled-coil conformation. WD repeat units lie at residues 106-147 (GHRA…RSLK), 148-187 (GHTD…ECVK), 191-230 (GHDH…CVKT), 233-272 (GHRE…CKVE), 275-334 (DHEH…CLFT), 337-376 (GHDN…CMKT), and 379-411 (AHQH…WECR).

This sequence belongs to the WD repeat LIS1/nudF family.

Its subcellular location is the cytoplasm. The protein localises to the cytoskeleton. It localises to the microtubule organizing center. It is found in the centrosome. Positively regulates the activity of the minus-end directed microtubule motor protein dynein. May enhance dynein-mediated microtubule sliding by targeting dynein to the microtubule plus end. Required for several dynein- and microtubule-dependent processes. This Drosophila ananassae (Fruit fly) protein is Lissencephaly-1 homolog.